Here is a 261-residue protein sequence, read N- to C-terminus: Transcription repressor OFP15 (261 aa).

The interval 1-28 (MKLPFLNKNHSTSSYSSNSSSSSWPWPS) is disordered. The span at 11–28 (STSSYSSNSSSSSWPWPS) shows a compositional bias: low complexity. One can recognise an OVATE domain in the interval 112–172 (FSLESDDPYS…FAAFVDLLMN (61 aa)).

As to quaternary structure, interacts with BLH1 and BLH3. As to expression, expressed in roots, cauline leaves, shoots, flower buds and siliques.

Its subcellular location is the nucleus. Transcriptional repressor that regulates multiple aspects of plant growth and development through the regulation of BEL1-LIKE (BLH) and KNOX TALE (KNAT) homeodomain transcription factors. In Arabidopsis thaliana (Mouse-ear cress), this protein is Transcription repressor OFP15 (OFP15).